We begin with the raw amino-acid sequence, 380 residues long: MPSPLCIALVAGEASGDILGSGLMRALKVRHPDIRFIGVGGPLMEAEGMQSSFPMERLSVMGLVEVLGRLRELLARRKLLVQTLINEKPDVFIGIDAPDFTLNIELQLRRAGIKTVHYVSPSVWAWRQKRVLKIREGCDLMLTLLPFEARFYEEQGVPVRFVGHPLADTIPLESDRAGARAGLGLAQETPVVALMPGSRGGEVGRLGGLFFDTAERLLARCPELRFVLPCASPQRRAQVEQLLQGRDLPVTLLDGQSHVALAACDAVLIASGTATLEALLYKRPMVVAYRLAPLTFWILKRMVKSPYVSLPNLLAQRLLVPELLQDDATPEALARTLLPLIDDGREQTAGFDAIHRILRRDASNQAADAVLSLLGRSPSL.

The protein belongs to the LpxB family.

It carries out the reaction a lipid X + a UDP-2-N,3-O-bis[(3R)-3-hydroxyacyl]-alpha-D-glucosamine = a lipid A disaccharide + UDP + H(+). It participates in bacterial outer membrane biogenesis; LPS lipid A biosynthesis. Functionally, condensation of UDP-2,3-diacylglucosamine and 2,3-diacylglucosamine-1-phosphate to form lipid A disaccharide, a precursor of lipid A, a phosphorylated glycolipid that anchors the lipopolysaccharide to the outer membrane of the cell. The polypeptide is Lipid-A-disaccharide synthase (Pseudomonas syringae pv. syringae (strain B728a)).